Reading from the N-terminus, the 211-residue chain is Mitotic spindle assembly checkpoint protein MAD2B (211 aa).

Positions 13–203 (QVVADVLCEF…SDILKMQLYV (191 aa)) constitute an HORMA domain. The mediates interaction with REV1 and REV3L and homodimerization stretch occupies residues 21 to 155 (EFLEVAVHLI…FTVLVHTREA (135 aa)).

Homooligomer. Heterodimer with REV3L. This dimer forms the minimal DNA polymerase zeta complex (Pol-zeta2), with REV3L bearing DNA polymerase catalytic activity, although its activity is very low in this context. Component of the tetrameric Pol-zeta complex (Pol-zeta4), which consists of REV3L, MAD2L2, POLD2 and POLD3; Pol-zeta4 is the fully active form of DNA polymerase zeta. Component of the shieldin complex, consisting of SHLD1, SHLD2, SHLD3 and MAD2L2/REV7. Within the complex, SHLD2 forms a scaffold which interacts with a SHLD3-MAD2L2 subcomplex via its N-terminus, and with SHLD1 via its C-terminus. Interacts with REV1. Interacts with ADAM9. Interacts with CHAMP1. Interacts with FZR1 (in complex with the anaphase promoting complex APC). May interact with CDC20. Interacts with RAN. Interacts with ELK1; the interaction is direct and recruits MAD2L2 to ELK1-specific promoters. May interact with the JNK kinases MAPK8 and/or MAPK9 to stimulate ELK1 phosphorylation and transcriptional activity upon DNA damage. Interacts with TCF7L2; prevents its binding to promoters and negatively modulates its transcriptional activity. Interacts with YY1AP1. Interacts with PRCC; the interaction is direct. Interacts with POGZ. Interacts with ASTE1.

Its subcellular location is the nucleus. It is found in the cytoplasm. The protein localises to the cytoskeleton. It localises to the spindle. Its function is as follows. Adapter protein able to interact with different proteins and involved in different biological processes. Mediates the interaction between the error-prone DNA polymerase zeta catalytic subunit REV3L and the inserter polymerase REV1, thereby mediating the second polymerase switching in translesion DNA synthesis. Translesion DNA synthesis releases the replication blockade of replicative polymerases, stalled in presence of DNA lesions. Component of the shieldin complex, which plays an important role in repair of DNA double-stranded breaks (DSBs). During G1 and S phase of the cell cycle, the complex functions downstream of TP53BP1 to promote non-homologous end joining (NHEJ) and suppress DNA end resection. Mediates various NHEJ-dependent processes including immunoglobulin class-switch recombination, and fusion of unprotected telomeres. May also regulate another aspect of cellular response to DNA damage through regulation of the JNK-mediated phosphorylation and activation of the transcriptional activator ELK1. Inhibits the FZR1- and probably CDC20-mediated activation of the anaphase promoting complex APC thereby regulating progression through the cell cycle. Regulates TCF7L2-mediated gene transcription and may play a role in epithelial-mesenchymal transdifferentiation. The polypeptide is Mitotic spindle assembly checkpoint protein MAD2B (MAD2L2) (Bos taurus (Bovine)).